We begin with the raw amino-acid sequence, 351 residues long: MRFRAELEPLSPYNPPRASQEAAAERGTGGLVKLTSNELSFGPLPEAEAALAEALPRANRYPDRYAAALREAVAAANPGSDVANVLVGNGSSEVLQNLLMLVERPGEVLFPWPTFTLYPSIAGTLGLRARRVPLTEEHRVKPEALLSAVTGETRAVILCNPNNPTGTHLTLEEVSALADALPEDVLLILDEAYQEFVADPAYHGSHALALERPNVAVARTFSKAHGLAGFRVGYGLASREIADYAERVRFPFSVNLAAQVAATASMQAREKIRARAEFVIRERERVERAFREAGLNYVHSQGNFVLVETSPALFERAGVLVREGDPLGYPGWSRVTIGNTQENDLVIGALG.

The tract at residues 1 to 26 (MRFRAELEPLSPYNPPRASQEAAAER) is disordered. K223 is modified (N6-(pyridoxal phosphate)lysine).

The protein belongs to the class-II pyridoxal-phosphate-dependent aminotransferase family. Histidinol-phosphate aminotransferase subfamily. Homodimer. The cofactor is pyridoxal 5'-phosphate.

The enzyme catalyses L-histidinol phosphate + 2-oxoglutarate = 3-(imidazol-4-yl)-2-oxopropyl phosphate + L-glutamate. The protein operates within amino-acid biosynthesis; L-histidine biosynthesis; L-histidine from 5-phospho-alpha-D-ribose 1-diphosphate: step 7/9. This chain is Histidinol-phosphate aminotransferase, found in Rubrobacter xylanophilus (strain DSM 9941 / JCM 11954 / NBRC 16129 / PRD-1).